The chain runs to 199 residues: Recombination protein RecR (199 aa).

A C4-type zinc finger spans residues 57 to 72 (CSICGNITEDDPCDIC). The 97-residue stretch at 80–176 (KAVLVVEDSK…KVTRLAHGLS (97 aa)) folds into the Toprim domain.

It belongs to the RecR family.

In terms of biological role, may play a role in DNA repair. It seems to be involved in an RecBC-independent recombinational process of DNA repair. It may act with RecF and RecO. The chain is Recombination protein RecR from Pediococcus pentosaceus (strain ATCC 25745 / CCUG 21536 / LMG 10740 / 183-1w).